Reading from the N-terminus, the 71-residue chain is uncharacterized protein (71 aa).

The chain crosses the membrane as a helical span at residues 12–34; the sequence is YLYNYFSSTTSWLVFIILSLDTI.

It is found in the membrane. This is an uncharacterized protein from Schizosaccharomyces pombe (strain 972 / ATCC 24843) (Fission yeast).